Here is a 341-residue protein sequence, read N- to C-terminus: Glycerol-3-phosphate dehydrogenase [NAD(P)+] (341 aa).

NADPH-binding residues include serine 13, tryptophan 14, and lysine 108. 3 residues coordinate sn-glycerol 3-phosphate: lysine 108, glycine 139, and serine 141. Position 143 (alanine 143) interacts with NADPH. Residues lysine 194, aspartate 247, serine 257, arginine 258, and asparagine 259 each coordinate sn-glycerol 3-phosphate. Lysine 194 (proton acceptor) is an active-site residue. Residue arginine 258 coordinates NADPH. 2 residues coordinate NADPH: valine 282 and glutamate 284.

Belongs to the NAD-dependent glycerol-3-phosphate dehydrogenase family.

Its subcellular location is the cytoplasm. It carries out the reaction sn-glycerol 3-phosphate + NAD(+) = dihydroxyacetone phosphate + NADH + H(+). The enzyme catalyses sn-glycerol 3-phosphate + NADP(+) = dihydroxyacetone phosphate + NADPH + H(+). It participates in membrane lipid metabolism; glycerophospholipid metabolism. Functionally, catalyzes the reduction of the glycolytic intermediate dihydroxyacetone phosphate (DHAP) to sn-glycerol 3-phosphate (G3P), the key precursor for phospholipid synthesis. The polypeptide is Glycerol-3-phosphate dehydrogenase [NAD(P)+] (Lactococcus lactis subsp. lactis (strain IL1403) (Streptococcus lactis)).